The sequence spans 1021 residues: Caspase recruitment domain-containing protein 10 (1021 aa).

Positions 1 to 24 (MQGRADAGEADEEAGAGSGSEAEE) are disordered. Phosphoserine is present on Ser-18. One can recognise a CARD domain in the interval 23–115 (EEDALWERIE…EHFTLLTGQE (93 aa)). The stretch at 138 to 450 (TEVRRLREAR…LEAQLQRTQG (313 aa)) forms a coiled coil. Disordered regions lie at residues 475-544 (EFPS…MSDI), 597-616 (SPPAGLDPQDKSPDSMPGLG), and 790-809 (LVRPKPAGGTAGDSAEQLPA). Basic and acidic residues-rich tracts occupy residues 495–508 (HTSEEATDSEKEIN) and 525–535 (RQREEDPEPPK).

In terms of assembly, CARD10 and BCL10 bind to each other by CARD-CARD interaction. They both participate in a complex with MALT1, where MALT1 binds to BCL10. Interacts with TMEM43; this interaction is essential for EGFR-mediated NF-kappa-B activation. In terms of tissue distribution, highly expressed in kidney, heart followed by brain, lung, liver, skeletal muscle and testis.

In terms of biological role, scaffold protein that plays an important role in mediating the activation of NF-kappa-B via BCL10 or EGFR. The protein is Caspase recruitment domain-containing protein 10 (Card10) of Mus musculus (Mouse).